The sequence spans 128 residues: MTHQHLLTMFNLLPVGXNISTWWNFGSMLLSCLTIQIITGFFLAIHYTANINMAFSSIMHISRDVPYGWIMQNTHAIGXSLFFICIYIHIARGIYYGSYLNKEVWLSGTTLLITLMATASXXMCYHDT.

Transmembrane regions (helical) follow at residues 25–45 (FGSMLLSCLTIQIITGFFLAI), 69–90 (WIMQNTHAIGXSLFFICIYIHI), and 105–125 (WLSGTTLLITLMATASXXMCY). Positions 75 and 89 each coordinate heme b. Residue H126 participates in a ubiquinone binding.

The protein belongs to the cytochrome b family. As to quaternary structure, the cytochrome bc1 complex contains 3 respiratory subunits (MT-CYB, CYC1 and UQCRFS1), 2 core proteins (UQCRC1 and UQCRC2) and probably 6 low-molecular weight proteins. Heme b serves as cofactor.

It localises to the mitochondrion inner membrane. Component of the ubiquinol-cytochrome c reductase complex (complex III or cytochrome b-c1 complex) that is part of the mitochondrial respiratory chain. The b-c1 complex mediates electron transfer from ubiquinol to cytochrome c. Contributes to the generation of a proton gradient across the mitochondrial membrane that is then used for ATP synthesis. The protein is Cytochrome b (MT-CYB) of Crotalus viridis viridis (Prairie rattlesnake).